Here is a 201-residue protein sequence, read N- to C-terminus: Female-specific protein transformer (201 aa).

Residues 1-117 (MDADSSSRSP…RSRSRSRTPR (117 aa)) form a disordered region. The span at 9–37 (SPRDTRTCARPKEKVPYFADEGRERDRVR) shows a compositional bias: basic and acidic residues. Basic residues-rich tracts occupy residues 38–62 (NLRH…RARS) and 99–115 (KQRR…RSRT).

It localises to the nucleus speckle. Member of the regulatory pathway controlling female somatic sexual differentiation, regulated by Sxl. Activates dsx female-specific splicing by promoting the formation of a splicing enhancer complex which consists of tra, tra2 and sr proteins. This Drosophila hydei (Fruit fly) protein is Female-specific protein transformer (tra).